Reading from the N-terminus, the 291-residue chain is N-acetylmannosamine kinase (291 aa).

ATP is bound by residues 5 to 12 (AIDIGGTK) and 132 to 139 (GVGGGVVS). Zn(2+) contacts are provided by His156, Cys166, Cys168, and Cys173.

It belongs to the ROK (NagC/XylR) family. NanK subfamily. In terms of assembly, homodimer.

It carries out the reaction an N-acyl-D-mannosamine + ATP = an N-acyl-D-mannosamine 6-phosphate + ADP + H(+). The protein operates within amino-sugar metabolism; N-acetylneuraminate degradation; D-fructose 6-phosphate from N-acetylneuraminate: step 2/5. Functionally, catalyzes the phosphorylation of N-acetylmannosamine (ManNAc) to ManNAc-6-P. The polypeptide is N-acetylmannosamine kinase (Escherichia coli O1:K1 / APEC).